The sequence spans 270 residues: MTIDDRGQIRSARRIVVKVGSSSISGENAGQIGPLVDALAEAHGRGSQVVLVSSGAIATGIPYLALTERPKDLATQQAAAAVGQNVLIYRYQDSLDRYGIVAGQVLLTARDVENPTHRSNAKRAMERLLDLRILPIVNENDTVATHEIRFGDNDRLAALVAKLVEADLLVLLSDVDALYTKPPQESGAERIAHVGWNDQLEGVEIGSAGPSGVGTGGALTKVSAARQAAEHGTAVVLTATSLVVDALRGEPVGTWFAPAQETAVESAPAS.

An ATP-binding site is contributed by Lys-18. Substrate contacts are provided by Ser-54, Asp-141, and Asn-153. ATP is bound at residue Ser-173–Asp-174.

Belongs to the glutamate 5-kinase family.

It localises to the cytoplasm. It carries out the reaction L-glutamate + ATP = L-glutamyl 5-phosphate + ADP. It participates in amino-acid biosynthesis; L-proline biosynthesis; L-glutamate 5-semialdehyde from L-glutamate: step 1/2. Its function is as follows. Catalyzes the transfer of a phosphate group to glutamate to form L-glutamate 5-phosphate. The chain is Glutamate 5-kinase from Leifsonia xyli subsp. xyli (strain CTCB07).